Reading from the N-terminus, the 842-residue chain is Outer membrane usher protein LpfC (842 aa).

Positions 1 to 21 (MTWTHLPLGNKTSRFTQSALA) are cleaved as a signal peptide. Cys819 and Cys841 are disulfide-bonded.

It belongs to the fimbrial export usher family.

It localises to the cell outer membrane. Functionally, involved in the export and assembly of LpfA fimbrial subunits across the outer membrane. The chain is Outer membrane usher protein LpfC (lpfC) from Salmonella typhimurium (strain LT2 / SGSC1412 / ATCC 700720).